A 440-amino-acid chain; its full sequence is Glycerophosphocholine cholinephosphodiesterase ENPP6 (440 aa).

An N-terminal signal peptide occupies residues 1-22 (MAVKLGTLLLALALGLAQPASA). Residues aspartate 32, serine 71, and asparagine 92 each coordinate substrate. Residues aspartate 32 and serine 71 each coordinate Zn(2+). The Nucleophile role is filled by serine 71. At serine 71 the chain carries Phosphoserine. Residues asparagine 100 and asparagine 118 are each glycosylated (N-linked (GlcNAc...) asparagine). Cysteine 142 and cysteine 154 form a disulfide bridge. Aspartate 193 contributes to the substrate binding site. Aspartate 193, histidine 197, aspartate 240, and histidine 241 together coordinate Zn(2+). Histidine 241 contributes to the substrate binding site. Asparagine 341 is a glycosylation site (N-linked (GlcNAc...) asparagine). A substrate-binding site is contributed by histidine 354. Histidine 354 serves as a coordination point for Zn(2+). N-linked (GlcNAc...) asparagine glycosylation is present at asparagine 404. A lipid anchor (GPI-anchor amidated serine) is attached at serine 419. Positions 420-440 (TAPPVWPSHCALALILLFLLA) are cleaved as a propeptide — removed in mature form.

It belongs to the nucleotide pyrophosphatase/phosphodiesterase family. In terms of assembly, homodimer; disulfide-linked. Homotetramer. The cofactor is Zn(2+). In terms of tissue distribution, predominantly expressed in kidney and brain. In the kidney, expressed specifically in the proximal tubules and thin descending limbs of Henle (at protein level).

The protein resides in the cell membrane. The enzyme catalyses sn-glycerol 3-phosphocholine + H2O = phosphocholine + glycerol + H(+). It carries out the reaction a 1-acyl-sn-glycero-3-phosphocholine + H2O = a 1-acyl-sn-glycerol + phosphocholine + H(+). The catalysed reaction is a 1-O-alkyl-sn-glycero-3-phosphocholine + H2O = a 1-O-alkyl-sn-glycerol + phosphocholine + H(+). It catalyses the reaction 1-dodecanoyl-sn-glycero-3-phosphocholine + H2O = 1-dodecanoyl-sn-glycerol + phosphocholine + H(+). The enzyme catalyses 1-hexadecanoyl-sn-glycero-3-phosphocholine + H2O = 1-hexadecanoyl-sn-glycerol + phosphocholine + H(+). It carries out the reaction 1-(5Z,8Z,11Z,14Z-eicosatetraenoyl)-sn-glycero-3-phosphocholine + H2O = 1-(5Z,8Z,11Z,14Z-eicosatetraenoyl)-sn-glycerol + phosphocholine + H(+). The catalysed reaction is 1-tetradecanoyl-sn-glycero-3-phosphocholine + H2O = 1-tetradecanoyl-sn-glycerol + phosphocholine + H(+). It catalyses the reaction sphing-4-enine-phosphocholine + H2O = sphing-4-enine + phosphocholine + H(+). The enzyme catalyses 1-(9Z-octadecenoyl)-sn-glycero-3-phosphocholine + H2O = 1-(9Z-octadecenoyl)-sn-glycerol + phosphocholine + H(+). It carries out the reaction 1-(9Z,12Z)-octadecadienoyl-sn-glycero-3-phosphocholine + H2O = 1-(9Z,12Z-octadecadienoyl)-sn-glycerol + phosphocholine + H(+). The catalysed reaction is glycero-2-phosphocholine + H2O = phosphocholine + glycerol + H(+). Inhibited by EDTA and EGTA in vitro. Its function is as follows. Choline-specific glycerophosphodiesterase that hydrolyzes glycerophosphocholine (GPC) and lysophosphatidylcholine (LPC) and contributes to supplying choline to the cells. Has a preference for LPC with short (12:0 and 14:0) or polyunsaturated (18:2 and 20:4) fatty acids. In vitro, hydrolyzes only choline-containing lysophospholipids, such as sphingosylphosphorylcholine (SPC), platelet-activating factor (PAF) and lysoPAF, but not other lysophospholipids. The polypeptide is Glycerophosphocholine cholinephosphodiesterase ENPP6 (Homo sapiens (Human)).